We begin with the raw amino-acid sequence, 43 residues long: Protein PsbN (43 aa).

A helical membrane pass occupies residues 4-24 (ATIIVIFVSSLLLGITAYSIY).

The protein belongs to the PsbN family.

Its subcellular location is the plastid. It localises to the chloroplast thylakoid membrane. May play a role in photosystem I and II biogenesis. The polypeptide is Protein PsbN (Trieres chinensis (Marine centric diatom)).